Reading from the N-terminus, the 411-residue chain is uncharacterized protein (411 aa).

This is an uncharacterized protein from Mycoplasma genitalium (strain ATCC 33530 / DSM 19775 / NCTC 10195 / G37) (Mycoplasmoides genitalium).